The chain runs to 225 residues: UPF0758 protein Ping_0056 (225 aa).

In terms of domain architecture, MPN spans 103–225 (ALTSAAQTKA…CTSFAENGWI (123 aa)). Residues H174, H176, and D187 each contribute to the Zn(2+) site. Positions 174–187 (HNHPSGDPSASEAD) match the JAMM motif motif.

The protein belongs to the UPF0758 family.

The sequence is that of UPF0758 protein Ping_0056 from Psychromonas ingrahamii (strain DSM 17664 / CCUG 51855 / 37).